The chain runs to 483 residues: Probable glycosyltransferase 6 (483 aa).

Over 1-40 (MAASETAPFGVSAASKGGGGVAGARAQHGQLAVAGRVHDA) the chain is Cytoplasmic. The helical; Signal-anchor for type II membrane protein transmembrane segment at 41-61 (LVFAAGAVAAVLVLLATASFL) threads the bilayer. Topologically, residues 62–483 (SPMPVTNLVA…PLPFDYPAAR (422 aa)) are lumenal. An N-linked (GlcNAc...) asparagine glycan is attached at asparagine 144.

It belongs to the glycosyltransferase 34 family.

Its subcellular location is the golgi apparatus membrane. In terms of biological role, probable glycosyltransferase that may be involved in the biosynthesis of xyloglucan. This is Probable glycosyltransferase 6 from Oryza sativa subsp. japonica (Rice).